The sequence spans 347 residues: MTDICTICHNTPNRPVRLDCNHEFCYICIKGSIQNDMLNCAVCRRPFDSSIILNLSAQVCLKGDAPRDVDDDEEEVQDEEIDVKPDVNLLRAAMNANQNGNRELVAAAPHMNNNGNFHNAQGNYQVPTTSQGMVNQFGWPQFQAHSDFPYTLGYWGNQFPPFWNNAARNWGDVQQAANPVFAGNNQFLGNTQYNVFPPGQMGLPLPTTNIKMDIRDDEQNSVGGQQGMQTPTAGSDVPTAAQYNVQANFNVARVKFFWLYSSRGDGWWRFDQRCEKDIEDEFLANKPNMEMYLFGKPYILDFVAMRQWQKGNLDAWRQIKRVTSSEFDMHNVKGIAGCHVPNVWTVD.

Residues 5 to 44 form an RING-type zinc finger; it reads CTICHNTPNRPVRLDCNHEFCYICIKGSIQNDMLNCAVCR. The 78-residue stretch at 244 to 321 folds into the WWE domain; the sequence is NVQANFNVAR…NLDAWRQIKR (78 aa).

This is an uncharacterized protein from Caenorhabditis elegans.